Consider the following 121-residue polypeptide: Lysozyme (121 aa).

A C-type lysozyme domain is found at 1–121 (KTFTRCELVQ…NKPLPDISKC (121 aa)). 4 disulfide bridges follow: cysteine 6–cysteine 121, cysteine 27–cysteine 110, cysteine 62–cysteine 76, and cysteine 72–cysteine 90. Catalysis depends on residues glutamate 32 and aspartate 50.

This sequence belongs to the glycosyl hydrolase 22 family.

It catalyses the reaction Hydrolysis of (1-&gt;4)-beta-linkages between N-acetylmuramic acid and N-acetyl-D-glucosamine residues in a peptidoglycan and between N-acetyl-D-glucosamine residues in chitodextrins.. Its function is as follows. Lysozymes have primarily a bacteriolytic function; those in tissues and body fluids are associated with the monocyte-macrophage system and enhance the activity of immunoagents. The sequence is that of Lysozyme from Galleria mellonella (Greater wax moth).